The chain runs to 47 residues: Heat shock protein HSP 90 (47 aa).

The protein belongs to the heat shock protein 90 family. Homodimer.

It is found in the cytoplasm. Functionally, putative molecular chaperone that may promote the maturation, structural maintenance and proper regulation of specific target proteins. The protein is Heat shock protein HSP 90 of Oryctolagus cuniculus (Rabbit).